Here is a 1006-residue protein sequence, read N- to C-terminus: MKLSSACAIALLAAQAAGASIKHRINGFTLTEHSDPAKRELLQKYVTWDDKSLFINGERIMIFSGEFHPFRLPVKELQLDIFQKVKALGFNCVSFYVDWALVEGKPGEYRADGIFDLEPFFDAASEAGIYLLARPGPYINAESSGGGFPGWLQRVNGTLRSSDKAYLDATDNYVSHVAATIAKYQITNGGPIILYQPENEYTSGCSGVEFPDPVYMQYVEDQARNAGVVIPLINNDASASGNNAPGTGKGAVDIYGHDSYPLGFDCANPTVWPSGDLPTNFRTLHLEQSPTTPYAIVEFQGGSYDPWGGPGFAACSELLNNEFERVFYKNDFSFQIAIMNLYMIFGGTNWGNLGYPNGYTSYDYGSAVTESRNITREKYSELKLLGNFAKVSPGYLTASPGNLTTSGYADTTDLTVTPLLGNSTGSFFVVRHSDYSSEESTSYKLRLPTSAGSVTIPQLGGTLTLNGRDSKIHVTDHNVSGTNIIYSTAEVFTWKKFADGKVLVLYGGAGEHHELAISTKSNVTVIEGSESGISSKQTSSSVVVGWDVSTTRRIIQVGDLKILLLDRNSAYNYWVPQLATDGTSPGFSTPEKVASSIIVKAGYLVRTAYLKGSGLYLTADFNATTSVEVIGVPSTAKNLFINGDKTSHTVDKNGIWSATVDYNAPDISLPSLKDLDWKYVDTLPEIQSSYDDSLWPAADLKQTKNTLRSLTTPTSLYSSDYGFHTGYLLYRGHFTATGNESTFAIDTQGGSAFGSSVWLNGTYLGSWTGLYANSDYNATYNLPQLQAGKTYVITVVIDNMGLEENWTVGEDLMKSPRGISTSCLPDGQAAPISWKLTGNLGGEDYEDKVRGPLNEGGLYAERQGFHQPEPPSQNWKSSSPLEGLSEAGIGFYSASFDLDLPKDGMSHCSSTSVTALRHPRTACRSTSTDIVCEIHKQHRTSDQLPCPRGNPELSRNELVGGDPVALDSAGGKLESLELSYTTPVLTALGEVESVDQPKYKKRKGAY.

The first 19 residues, 1–19, serve as a signal peptide directing secretion; the sequence is MKLSSACAIALLAAQAAGA. N-linked (GlcNAc...) asparagine glycosylation is present at asparagine 156. Glutamate 200 acts as the Proton donor in catalysis. The Nucleophile role is filled by glutamate 298. Residues asparagine 373, asparagine 402, asparagine 422, asparagine 478, asparagine 522, asparagine 622, asparagine 739, asparagine 760, asparagine 777, and asparagine 805 are each glycosylated (N-linked (GlcNAc...) asparagine).

Belongs to the glycosyl hydrolase 35 family.

The enzyme catalyses Hydrolysis of terminal non-reducing beta-D-galactose residues in beta-D-galactosides.. Its function is as follows. Cleaves beta-linked terminal galactosyl residues from gangliosides, glycoproteins, and glycosaminoglycans. This chain is Beta-galactosidase (lacA), found in Aspergillus niger.